A 251-amino-acid chain; its full sequence is Hydroxyacylglutathione hydrolase (251 aa).

7 residues coordinate Zn(2+): His-55, His-57, Asp-59, His-60, His-112, Asp-131, and His-169.

This sequence belongs to the metallo-beta-lactamase superfamily. Glyoxalase II family. As to quaternary structure, monomer. Requires Zn(2+) as cofactor.

It carries out the reaction an S-(2-hydroxyacyl)glutathione + H2O = a 2-hydroxy carboxylate + glutathione + H(+). Its pathway is secondary metabolite metabolism; methylglyoxal degradation; (R)-lactate from methylglyoxal: step 2/2. In terms of biological role, thiolesterase that catalyzes the hydrolysis of S-D-lactoyl-glutathione to form glutathione and D-lactic acid. This is Hydroxyacylglutathione hydrolase from Erythrobacter litoralis (strain HTCC2594).